A 185-amino-acid chain; its full sequence is Translation initiation factor IF-3 (185 aa).

It belongs to the IF-3 family. As to quaternary structure, monomer.

It is found in the cytoplasm. In terms of biological role, IF-3 binds to the 30S ribosomal subunit and shifts the equilibrium between 70S ribosomes and their 50S and 30S subunits in favor of the free subunits, thus enhancing the availability of 30S subunits on which protein synthesis initiation begins. In Rickettsia typhi (strain ATCC VR-144 / Wilmington), this protein is Translation initiation factor IF-3.